A 509-amino-acid chain; its full sequence is Subtelomeric hrmA-associated cluster protein AFUA_5G14880 (509 aa).

Functionally, part of the subtelomeric hrmA-associated cluster (HAC) containing genes that alter the hyphal surface (such as reduced total chitin or increased beta-glucan exposure) and perturb inter-hyphal interactions within the developing biofilms, resulting in a loss of vertically aligned polarized growing filaments. Consequently, this hypoxia-typic morphotype (called H-MORPH) with altered biofilm architecture leads to increased hypoxia fitness, increased host inflammation, rapid disease progression, and mortality in a murine model of invasive aspergillosis. The polypeptide is Subtelomeric hrmA-associated cluster protein AFUA_5G14880 (Aspergillus fumigatus (strain ATCC MYA-4609 / CBS 101355 / FGSC A1100 / Af293) (Neosartorya fumigata)).